Here is a 534-residue protein sequence, read N- to C-terminus: DM7 family protein GE17491 (534 aa).

This sequence belongs to the DM7 family.

The protein is DM7 family protein GE17491 of Drosophila yakuba (Fruit fly).